Reading from the N-terminus, the 323-residue chain is CYFIP-related Rac1 interactor A (323 aa).

It belongs to the CYRI family. Interacts with RAC1 (GTP-bound form preferentially).

The protein localises to the membrane. Its function is as follows. May negatively regulate RAC1 signaling and RAC1-driven cytoskeletal remodeling. May regulate chemotaxis, cell migration and epithelial polarization by controlling the polarity, plasticity, duration and extent of protrusions. This chain is CYFIP-related Rac1 interactor A (CYRIA), found in Bos taurus (Bovine).